The following is a 161-amino-acid chain: DNA-directed RNA polymerase 19 kDa subunit (161 aa).

The span at 1–32 (MADTDDIIDYESDDLTEYEDDEEDGESLETSD) shows a compositional bias: acidic residues. The interval 1-35 (MADTDDIIDYESDDLTEYEDDEEDGESLETSDIDP) is disordered.

The protein belongs to the poxviridae DNA-directed RNA polymerase 19 kDa subunit family. As to quaternary structure, the DNA-dependent RNA polymerase used for intermediate and late genes expression consists of eight subunits Rpo30/OPG66, Rpo7/OPG90, Rpo22/OPG103, Rpo147/OPG105, Rpo18/OPG119, Rpo19/OPG131, Rpo132/OPG151 and Rpo35/OPG156. The same holoenzyme, with the addition of the transcription-specificity factor OPG109, is used for early gene expression.

It is found in the virion. The enzyme catalyses RNA(n) + a ribonucleoside 5'-triphosphate = RNA(n+1) + diphosphate. Its function is as follows. Part of the DNA-dependent RNA polymerase which catalyzes the transcription of viral DNA into RNA using the four ribonucleoside triphosphates as substrates. Responsible for the transcription of early, intermediate and late genes. DNA-dependent RNA polymerase associates with the early transcription factor (ETF), itself composed of OPG118 and OPG133, thereby allowing the early genes transcription. Late transcription, and probably also intermediate transcription, require newly synthesized RNA polymerase. This is DNA-directed RNA polymerase 19 kDa subunit (OPG131) from Monkeypox virus.